Reading from the N-terminus, the 185-residue chain is Ribosome-recycling factor (185 aa).

It belongs to the RRF family.

Its subcellular location is the cytoplasm. Responsible for the release of ribosomes from messenger RNA at the termination of protein biosynthesis. May increase the efficiency of translation by recycling ribosomes from one round of translation to another. The protein is Ribosome-recycling factor of Mycobacterium avium (strain 104).